The primary structure comprises 231 residues: NADH-ubiquinone oxidoreductase chain 4 (231 aa).

6 consecutive transmembrane segments (helical) span residues 1–21 (PIAG…YGII), 34–54 (MFLP…LTCL), 63–85 (IAYS…TPWG), 89–111 (AMAL…NTTY), 128–148 (ILPM…AIPP), and 169–189 (TIIM…HMFL).

The protein belongs to the complex I subunit 4 family.

It is found in the mitochondrion membrane. The enzyme catalyses a ubiquinone + NADH + 5 H(+)(in) = a ubiquinol + NAD(+) + 4 H(+)(out). Its function is as follows. Core subunit of the mitochondrial membrane respiratory chain NADH dehydrogenase (Complex I) that is believed to belong to the minimal assembly required for catalysis. Complex I functions in the transfer of electrons from NADH to the respiratory chain. The immediate electron acceptor for the enzyme is believed to be ubiquinone. The polypeptide is NADH-ubiquinone oxidoreductase chain 4 (MT-ND4) (Deinagkistrodon acutus (Hundred-pace snake)).